Consider the following 323-residue polypeptide: Malate dehydrogenase (323 aa).

NAD(+) is bound by residues 20 to 25 (GAGRVG) and Asp44. Residues Arg93 and Arg99 each contribute to the substrate site. Residues Asn106 and 129–131 (VTN) each bind NAD(+). Positions 131 and 162 each coordinate substrate. The active-site Proton acceptor is the His186.

The protein belongs to the LDH/MDH superfamily. MDH type 3 family.

The catalysed reaction is (S)-malate + NAD(+) = oxaloacetate + NADH + H(+). Catalyzes the reversible oxidation of malate to oxaloacetate. The protein is Malate dehydrogenase of Nostoc sp. (strain PCC 7120 / SAG 25.82 / UTEX 2576).